Consider the following 63-residue polypeptide: Large ribosomal subunit protein bL28 (63 aa).

Positions 1 to 20 are disordered; sequence MSKRCAITGKGPMVGNNVSH.

It belongs to the bacterial ribosomal protein bL28 family.

In Campylobacter concisus (strain 13826), this protein is Large ribosomal subunit protein bL28.